Consider the following 296-residue polypeptide: MKKIAVFKQMPCEAADAPPAKTDLLPLSWPAKLELGYQRVKMRTVPVLRRHQGPLRVQKHLYPEGPAVCQHMILHPPGGIAGGDTLDIQIHAGSHAWAQLTSPGAAKWYRSEVSLARQNLALSTEPGGILEWLPQETIFFAGCQTALDTTIDLAEDAKVIAWDIIALGRPASGERFNSGRIYQRFRLRRNGRLLWSERMQLLGGSRLLESPIGFAGYPVAGTLLASGELNDQQLTACRSLPIEGGRGGLSQLPGLVVARFLGEETEAARNWFIALWQELRPALLGRSVSIPRIWNT.

This sequence belongs to the UreD family. In terms of assembly, ureD, UreF and UreG form a complex that acts as a GTP-hydrolysis-dependent molecular chaperone, activating the urease apoprotein by helping to assemble the nickel containing metallocenter of UreC. The UreE protein probably delivers the nickel.

Its subcellular location is the cytoplasm. In terms of biological role, required for maturation of urease via the functional incorporation of the urease nickel metallocenter. The chain is Urease accessory protein UreD from Nitrosococcus oceani (strain ATCC 19707 / BCRC 17464 / JCM 30415 / NCIMB 11848 / C-107).